The sequence spans 611 residues: Endo-1,4-beta-xylanase A (611 aa).

The first 26 residues, 1 to 26 (MRTAMAKSLGAAAFLGAALFAHTLAA), serve as a signal peptide directing secretion. The 102-residue stretch at 27–128 (QTATCSYNIT…SVGGSICSGS (102 aa)) folds into the CBM2 domain. 3 cysteine pairs are disulfide-bonded: C31–C125, C184–C215, and C194–C209. Residues 183-212 (QCNWYGTLYPLCVTTTNGWGWEDQRSCIAR) enclose the CBM10 domain. A GH10 domain is found at 281–607 (SGGNADIFTS…KPAYQGVVEA (327 aa)). E391 (proton donor) is an active-site residue. E510 acts as the Nucleophile in catalysis.

This sequence belongs to the glycosyl hydrolase 10 (cellulase F) family.

The enzyme catalyses Endohydrolysis of (1-&gt;4)-beta-D-xylosidic linkages in xylans.. It functions in the pathway glycan degradation; xylan degradation. The polypeptide is Endo-1,4-beta-xylanase A (xynA) (Cellvibrio japonicus (strain Ueda107) (Pseudomonas fluorescens subsp. cellulosa)).